Here is a 530-residue protein sequence, read N- to C-terminus: Phosphoenolpyruvate carboxykinase (ATP) (530 aa).

Substrate-binding residues include R60, Y195, and K201. ATP is bound by residues K201, H221, and 237-245; that span reads GLSGTGKTT. The Mn(2+) site is built by K201 and H221. Mn(2+) is bound at residue D258. ATP is bound by residues E286, R324, and S449. R324 provides a ligand contact to substrate.

This sequence belongs to the phosphoenolpyruvate carboxykinase (ATP) family. Mn(2+) serves as cofactor.

Its subcellular location is the cytoplasm. It catalyses the reaction oxaloacetate + ATP = phosphoenolpyruvate + ADP + CO2. The protein operates within carbohydrate biosynthesis; gluconeogenesis. Its function is as follows. Involved in the gluconeogenesis. Catalyzes the conversion of oxaloacetate (OAA) to phosphoenolpyruvate (PEP) through direct phosphoryl transfer between the nucleoside triphosphate and OAA. This Geotalea uraniireducens (strain Rf4) (Geobacter uraniireducens) protein is Phosphoenolpyruvate carboxykinase (ATP).